The chain runs to 328 residues: Oligopeptide transport ATP-binding protein AppD (328 aa).

In terms of domain architecture, ABC transporter spans 5–256; the sequence is LEVNNLKTYF…PLHPYTEGLL (252 aa). ATP is bound at residue 41–48; it reads GESGSGKS.

Belongs to the ABC transporter superfamily.

The protein resides in the cell membrane. Functionally, this protein is a component of an oligopeptide permease, a binding protein-dependent transport system. This APP system can completely substitute for the OPP system in both sporulation and genetic competence, though, unlike OPP, is incapable of transporting tripeptides. Probably responsible for energy coupling to the transport system. This is Oligopeptide transport ATP-binding protein AppD (appD) from Bacillus subtilis (strain 168).